We begin with the raw amino-acid sequence, 179 residues long: Replication restart protein DnaT (179 aa).

The interval 156 to 179 (GGLPKRDVNTVSEPDSQIPPGFRG) is disordered.

The protein belongs to the DnaT family. In terms of assembly, homooligomerizes. Interacts with PriB. Component of the replication restart primosome. Primosome assembly occurs via a 'hand-off' mechanism. PriA binds to replication forks, subsequently PriB then DnaT bind; DnaT then displaces ssDNA to generate the helicase loading substrate.

Involved in the restart of stalled replication forks, which reloads the replicative helicase on sites other than the origin of replication. Can function in multiple replication restart pathways. Displaces ssDNA from a PriB-ssDNA complex. Probably forms a spiral filament on ssDNA. This Shigella dysenteriae serotype 1 (strain Sd197) protein is Replication restart protein DnaT.